The chain runs to 37 residues: Mu-agatoxin-Aa1f (37 aa).

Cystine bridges form between Cys-2–Cys-18, Cys-9–Cys-23, Cys-17–Cys-33, and Cys-25–Cys-31. Position 37 is an asparagine amide (Asn-37).

It belongs to the neurotoxin 07 (Beta/delta-agtx) family. 03 (aga-4) subfamily. Aga sub-subfamily. In terms of tissue distribution, expressed by the venom gland.

The protein resides in the secreted. In terms of biological role, insecticidal neurotoxin that induces an irreversible spastic paralysis when injected into insects. Modifies presynaptic voltage-gated sodium channels (Nav), causing them to open at the normal resting potential of the nerve. This leads to spontaneous release of neurotransmitter and repetitive action potentials in motor neurons. The protein is Mu-agatoxin-Aa1f of Agelenopsis aperta (North American funnel-web spider).